A 195-amino-acid polypeptide reads, in one-letter code: MSQLPIPLPLNESRWRYVTASGGGMTVAFLAGSGGSITLLSPEGENVSFRYGGVGGGIGLGMRLPRFGKVNLNVKGKSVGGAGALEALPSTGTVLVADGLVGRDLSRGDFTGPCMYVELGAGVIAGGSGTAILFGLDPKLLAAVALASASPLTAALGASMSRQLLQSSRGALLMAGVNVGAQFGGGAAAYLGALF.

4 helical membrane-spanning segments follow: residues 20-40 (ASGGGMTVAFLAGSGGSITLL), 116-136 (YVELGAGVIAGGSGTAILFGL), 140-160 (LLAAVALASASPLTAALGASM), and 171-191 (ALLMAGVNVGAQFGGGAAAYL).

The protein resides in the host membrane. The protein localises to the secreted. In terms of biological role, toxin secreted by the H1 type VI (H1-T6SS) secretion system into the periplasm of recipient cells. The chain is Toxin protein Tse4 from Pseudomonas aeruginosa (strain ATCC 15692 / DSM 22644 / CIP 104116 / JCM 14847 / LMG 12228 / 1C / PRS 101 / PAO1).